The primary structure comprises 473 residues: Photosystem II CP43 reaction center protein (473 aa).

A propeptide spanning residues Met1 to Glu14 is cleaved from the precursor. The residue at position 15 (Thr15) is an N-acetylthreonine. Thr15 carries the post-translational modification Phosphothreonine. 5 consecutive transmembrane segments (helical) span residues Leu69–Ala93, Leu134–Asn155, Lys178–Thr200, Lys255–Ser275, and Trp291–Ala312. Glu367 contacts [CaMn4O5] cluster. A helical membrane pass occupies residues Arg447–Pro471.

It belongs to the PsbB/PsbC family. PsbC subfamily. In terms of assembly, PSII is composed of 1 copy each of membrane proteins PsbA, PsbB, PsbC, PsbD, PsbE, PsbF, PsbH, PsbI, PsbJ, PsbK, PsbL, PsbM, PsbT, PsbX, PsbY, PsbZ, Psb30/Ycf12, at least 3 peripheral proteins of the oxygen-evolving complex and a large number of cofactors. It forms dimeric complexes. Binds multiple chlorophylls and provides some of the ligands for the Ca-4Mn-5O cluster of the oxygen-evolving complex. It may also provide a ligand for a Cl- that is required for oxygen evolution. PSII binds additional chlorophylls, carotenoids and specific lipids. is required as a cofactor.

It is found in the plastid. The protein resides in the chloroplast thylakoid membrane. One of the components of the core complex of photosystem II (PSII). It binds chlorophyll and helps catalyze the primary light-induced photochemical processes of PSII. PSII is a light-driven water:plastoquinone oxidoreductase, using light energy to abstract electrons from H(2)O, generating O(2) and a proton gradient subsequently used for ATP formation. This is Photosystem II CP43 reaction center protein from Abies alba (Edeltanne).